The chain runs to 59 residues: uncharacterized protein (59 aa).

This is an uncharacterized protein from Saccharomyces cerevisiae (strain ATCC 204508 / S288c) (Baker's yeast).